Consider the following 364-residue polypeptide: Phosphoserine aminotransferase (364 aa).

R46 lines the L-glutamate pocket. Residues 80 to 81, W106, T157, D176, and Q199 contribute to the pyridoxal 5'-phosphate site; that span reads AR. K200 carries the post-translational modification N6-(pyridoxal phosphate)lysine. Position 241–242 (241–242) interacts with pyridoxal 5'-phosphate; the sequence is NT.

This sequence belongs to the class-V pyridoxal-phosphate-dependent aminotransferase family. SerC subfamily. In terms of assembly, homodimer. Pyridoxal 5'-phosphate is required as a cofactor.

It localises to the cytoplasm. It catalyses the reaction O-phospho-L-serine + 2-oxoglutarate = 3-phosphooxypyruvate + L-glutamate. The enzyme catalyses 4-(phosphooxy)-L-threonine + 2-oxoglutarate = (R)-3-hydroxy-2-oxo-4-phosphooxybutanoate + L-glutamate. The protein operates within amino-acid biosynthesis; L-serine biosynthesis; L-serine from 3-phospho-D-glycerate: step 2/3. Its pathway is cofactor biosynthesis; pyridoxine 5'-phosphate biosynthesis; pyridoxine 5'-phosphate from D-erythrose 4-phosphate: step 3/5. Catalyzes the reversible conversion of 3-phosphohydroxypyruvate to phosphoserine and of 3-hydroxy-2-oxo-4-phosphonooxybutanoate to phosphohydroxythreonine. The polypeptide is Phosphoserine aminotransferase (Vibrio vulnificus (strain CMCP6)).